Reading from the N-terminus, the 499-residue chain is GTPase Der (499 aa).

2 consecutive EngA-type G domains span residues 3 to 166 (PVVA…LETL) and 213 to 386 (IKFA…QSAT). GTP contacts are provided by residues 9-16 (GRPNVGKS), 56-60 (DTGGI), 118-121 (NKTD), 219-226 (GRPNVGKS), 266-270 (DTAGV), and 331-334 (NKWD). Residues 387 to 471 (RRTSTAMLTR…PIRVEFQESA (85 aa)) enclose the KH-like domain. The segment at 476 to 499 (GRKNTMTLSQERQRKRLLKAKTKK) is disordered. A compositionally biased stretch (basic residues) spans 488–499 (QRKRLLKAKTKK).

This sequence belongs to the TRAFAC class TrmE-Era-EngA-EngB-Septin-like GTPase superfamily. EngA (Der) GTPase family. Associates with the 50S ribosomal subunit.

GTPase that plays an essential role in the late steps of ribosome biogenesis. The chain is GTPase Der from Aeromonas salmonicida (strain A449).